We begin with the raw amino-acid sequence, 194 residues long: Imidazoleglycerol-phosphate dehydratase (194 aa).

It belongs to the imidazoleglycerol-phosphate dehydratase family.

The protein resides in the cytoplasm. It catalyses the reaction D-erythro-1-(imidazol-4-yl)glycerol 3-phosphate = 3-(imidazol-4-yl)-2-oxopropyl phosphate + H2O. It participates in amino-acid biosynthesis; L-histidine biosynthesis; L-histidine from 5-phospho-alpha-D-ribose 1-diphosphate: step 6/9. The polypeptide is Imidazoleglycerol-phosphate dehydratase (Listeria monocytogenes serotype 4b (strain F2365)).